The chain runs to 197 residues: Glycerol-3-phosphate acyltransferase (197 aa).

5 helical membrane passes run 2–22, 53–73, 78–98, 112–132, and 152–174; these read LDVILVIIGYLIGSISSAIVV, AGITLLGDWLKGTLPVLLAWL, PVVASAAGLAAFFGHLFPVYF, VILAWSPLALLATVVTWLAVA, and YMLWLSASPVLTAATAILTAAIV.

The protein belongs to the PlsY family. In terms of assembly, probably interacts with PlsX.

Its subcellular location is the cell inner membrane. It catalyses the reaction an acyl phosphate + sn-glycerol 3-phosphate = a 1-acyl-sn-glycero-3-phosphate + phosphate. The protein operates within lipid metabolism; phospholipid metabolism. Its function is as follows. Catalyzes the transfer of an acyl group from acyl-phosphate (acyl-PO(4)) to glycerol-3-phosphate (G3P) to form lysophosphatidic acid (LPA). This enzyme utilizes acyl-phosphate as fatty acyl donor, but not acyl-CoA or acyl-ACP. The polypeptide is Glycerol-3-phosphate acyltransferase (Halorhodospira halophila (strain DSM 244 / SL1) (Ectothiorhodospira halophila (strain DSM 244 / SL1))).